The sequence spans 136 residues: Piercer of microtubule wall 1 protein (136 aa).

Residues 1 to 16 (MSEEDPKACAEPEEPK) are compositionally biased toward basic and acidic residues. Residues 1-27 (MSEEDPKACAEPEEPKAGPPPEKTSDW) form a disordered region.

This sequence belongs to the PIERCE1 family. In terms of assembly, microtubule inner protein component of sperm flagellar doublet microtubules. Interacts with CFAP53, ODAD1 and ODAD3; the interactions link the outer dynein arms docking complex (ODA-DC) to the internal microtubule inner proteins (MIP) in cilium axoneme. As to expression, expressed in trachea multiciliated cells.

It is found in the cytoplasm. The protein localises to the cytoskeleton. The protein resides in the cilium axoneme. Its subcellular location is the flagellum axoneme. Microtubule inner protein involved in the attachment of outer dynein arms (ODAs) to dynein-decorated doublet microtubules (DMTs) in cilia axoneme, which is required for motile cilia beating. Functions at the initial step of left-right asymmetry specification of the visceral organs. The chain is Piercer of microtubule wall 1 protein (PIERCE1) from Bos taurus (Bovine).